The primary structure comprises 37 residues: Large ribosomal subunit protein bL36 (37 aa).

It belongs to the bacterial ribosomal protein bL36 family.

The protein is Large ribosomal subunit protein bL36 of Helicobacter pylori (strain HPAG1).